A 562-amino-acid chain; its full sequence is Terpene synthase 2 (562 aa).

The Mg(2+) site is built by D315, D319, D459, and E467. A DDXXD motif motif is present at residues 315–319 (DDEYD).

This sequence belongs to the terpene synthase family. Tpsa subfamily. Mg(2+) is required as a cofactor. Mn(2+) serves as cofactor. In terms of tissue distribution, expressed at low levels in stems, leaves, roots and fruits.

It catalyses the reaction (2E,6E)-farnesyl diphosphate = delta-cadinene + diphosphate. The catalysed reaction is (2E,6E)-farnesyl diphosphate = alpha-cadinene + diphosphate. It carries out the reaction (2E,6E)-farnesyl diphosphate + H2O = (-)-delta-cadinol + diphosphate. It participates in secondary metabolite biosynthesis; terpenoid biosynthesis. In terms of biological role, sesquiterpene synthase involved in the biosynthesis of volatile compounds that contribute to the characteristic flavors of black pepper. Mediates the conversion of (2E,6E)-farnesyl diphosphate (FPP) into alpha-cadinene, delta-cadinene and delta-cadinol. The protein is Terpene synthase 2 of Piper nigrum (Black pepper).